Here is a 419-residue protein sequence, read N- to C-terminus: L-rhamnose isomerase (419 aa).

The Mn(2+) site is built by H262, D294, and D296.

Belongs to the rhamnose isomerase family. In terms of assembly, homotetramer. The cofactor is Mn(2+).

The protein localises to the cytoplasm. The enzyme catalyses L-rhamnopyranose = L-rhamnulose. Its pathway is carbohydrate degradation; L-rhamnose degradation; glycerone phosphate from L-rhamnose: step 1/3. In terms of biological role, catalyzes the interconversion of L-rhamnose and L-rhamnulose. The chain is L-rhamnose isomerase from Escherichia coli O7:K1 (strain IAI39 / ExPEC).